A 297-amino-acid polypeptide reads, in one-letter code: 4-hydroxy-tetrahydrodipicolinate synthase (297 aa).

Position 47 (Thr-47) interacts with pyruvate. Tyr-135 (proton donor/acceptor) is an active-site residue. The active-site Schiff-base intermediate with substrate is the Lys-163. Ile-205 contributes to the pyruvate binding site.

This sequence belongs to the DapA family. As to quaternary structure, homotetramer; dimer of dimers.

It localises to the cytoplasm. The catalysed reaction is L-aspartate 4-semialdehyde + pyruvate = (2S,4S)-4-hydroxy-2,3,4,5-tetrahydrodipicolinate + H2O + H(+). Its pathway is amino-acid biosynthesis; L-lysine biosynthesis via DAP pathway; (S)-tetrahydrodipicolinate from L-aspartate: step 3/4. Functionally, catalyzes the condensation of (S)-aspartate-beta-semialdehyde [(S)-ASA] and pyruvate to 4-hydroxy-tetrahydrodipicolinate (HTPA). The protein is 4-hydroxy-tetrahydrodipicolinate synthase of Dehalococcoides mccartyi (strain ATCC BAA-2100 / JCM 16839 / KCTC 5957 / BAV1).